We begin with the raw amino-acid sequence, 189 residues long: Large ribosomal subunit protein eL14 (189 aa).

This sequence belongs to the eukaryotic ribosomal protein eL14 family.

Functionally, component of the large ribosomal subunit. The ribosome is a large ribonucleoprotein complex responsible for the synthesis of proteins in the cell. In Trypanosoma brucei brucei, this protein is Large ribosomal subunit protein eL14.